The primary structure comprises 158 residues: 6,7-dimethyl-8-ribityllumazine synthase (158 aa).

5-amino-6-(D-ribitylamino)uracil-binding positions include phenylalanine 22, 57 to 59 (AFE), and 81 to 83 (AVI). A (2S)-2-hydroxy-3-oxobutyl phosphate-binding site is contributed by 86 to 87 (GT). Histidine 89 functions as the Proton donor in the catalytic mechanism. Phenylalanine 114 lines the 5-amino-6-(D-ribitylamino)uracil pocket. Arginine 128 serves as a coordination point for (2S)-2-hydroxy-3-oxobutyl phosphate.

It belongs to the DMRL synthase family. Forms an icosahedral capsid composed of 60 subunits, arranged as a dodecamer of pentamers.

It catalyses the reaction (2S)-2-hydroxy-3-oxobutyl phosphate + 5-amino-6-(D-ribitylamino)uracil = 6,7-dimethyl-8-(1-D-ribityl)lumazine + phosphate + 2 H2O + H(+). It participates in cofactor biosynthesis; riboflavin biosynthesis; riboflavin from 2-hydroxy-3-oxobutyl phosphate and 5-amino-6-(D-ribitylamino)uracil: step 1/2. Functionally, catalyzes the formation of 6,7-dimethyl-8-ribityllumazine by condensation of 5-amino-6-(D-ribitylamino)uracil with 3,4-dihydroxy-2-butanone 4-phosphate. This is the penultimate step in the biosynthesis of riboflavin. The protein is 6,7-dimethyl-8-ribityllumazine synthase of Shewanella amazonensis (strain ATCC BAA-1098 / SB2B).